The following is a 54-amino-acid chain: Ovomucoid (54 aa).

Residues 4–54 (VDCSDYPKPVCSLEYMPLCGSDNKTYGNKCNFCNAVADSNGTLTLSHFGKC) enclose the Kazal-like domain. Cystine bridges form between Cys-6/Cys-36, Cys-14/Cys-33, and Cys-22/Cys-54. N-linked (GlcNAc...) asparagine glycosylation is present at Asn-43.

The protein localises to the secreted. This chain is Ovomucoid, found in Guira guira (Guira cuckoo).